The following is a 188-amino-acid chain: HTH-type transcriptional repressor AcnR (188 aa).

The 61-residue stretch at 10–70 folds into the HTH tetR-type domain; the sequence is VNSRQEILEG…ALAREDAARM (61 aa). The H-T-H motif DNA-binding region spans 33–52; that stretch reads TVRRLEEATGKSRGAIFHHF. Citrate contacts are provided by residues 79–80, R130, and N134; that span reads LV. E181 provides a ligand contact to Mg(2+). Citrate is bound at residue R185.

In terms of assembly, homodimer.

Its function is as follows. AcnR negatively controls the expression of the aconitase gene acn. The sequence is that of HTH-type transcriptional repressor AcnR from Corynebacterium efficiens (strain DSM 44549 / YS-314 / AJ 12310 / JCM 11189 / NBRC 100395).